Here is a 149-residue protein sequence, read N- to C-terminus: 3-hydroxyacyl-[acyl-carrier-protein] dehydratase FabZ (149 aa).

His48 is a catalytic residue.

This sequence belongs to the thioester dehydratase family. FabZ subfamily.

The protein resides in the cytoplasm. It carries out the reaction a (3R)-hydroxyacyl-[ACP] = a (2E)-enoyl-[ACP] + H2O. Involved in unsaturated fatty acids biosynthesis. Catalyzes the dehydration of short chain beta-hydroxyacyl-ACPs and long chain saturated and unsaturated beta-hydroxyacyl-ACPs. The polypeptide is 3-hydroxyacyl-[acyl-carrier-protein] dehydratase FabZ (Thermomicrobium roseum (strain ATCC 27502 / DSM 5159 / P-2)).